The chain runs to 149 residues: MGRMHTHRHGKSHSIRPATLRAPSWITQSPAEIEELVIKYSKDGLTPSQIGIKLRDQHSIPLIKPITKKTIGEILEENDLKAEMPEDLENIVKKAVGLQRHLKENKGDRRNVRSLELIEAKVHRLSVYYKKIGRIPATWKYKSVVAQLE.

Over residues 1–14 the composition is skewed to basic residues; the sequence is MGRMHTHRHGKSHS. The disordered stretch occupies residues 1–20; that stretch reads MGRMHTHRHGKSHSIRPATL.

Belongs to the universal ribosomal protein uS15 family. Part of the 30S ribosomal subunit.

The protein is Small ribosomal subunit protein uS15 of Nitrosopumilus maritimus (strain SCM1).